Consider the following 327-residue polypeptide: MCLQQLVISWVSLVWLASPLLAIWELEKNVYVVELDWHPDTPGEKVVLTCDTPEEDGITWTSEQSSEVLGSGKTLTILVKEFEDAGHYTCRRGGEVLSQMLLLLHKNEDGIWSTDILKKKEPENKNLVTCEAKNYSGRFTCWWLTAISTDVNFSVKSHRGSSDPQGVTCGEATLSAERVKIEQREYKKYSVQCQEDNACPTAEETLPITVVVDAVHKLKYENYISSFFIRDIIKPDPPKNLKMKPSKTPQQVEVTWEYPDSWSTPHSYFSLTFSVQVQGKKKKRSNTLHVDKTSVTVTCQKGAKVSVQARDRYYNSSWSEWATMSCP.

Residues Met-1 to Ala-22 form the signal peptide. The 84-residue stretch at Ile-23–Lys-106 folds into the Ig-like C2-type domain. A disulfide bridge links Cys-50 with Cys-90. 2 N-linked (GlcNAc...) asparagine glycosylation sites follow: Asn-134 and Asn-152. A Fibronectin type-III domain is found at Pro-237–Pro-327.

It belongs to the IL-12B family. In terms of assembly, heterodimer with IL12A; disulfide-linked. The heterodimer is known as interleukin IL-12. Heterodimer with IL23A; disulfide-linked. The heterodimer is known as interleukin IL-23. Also secreted as a monomer. Interacts with NBR1; this interaction promotes IL-12 secretion.

The protein resides in the secreted. In terms of biological role, cytokine that can act as a growth factor for activated T and NK cells, enhance the lytic activity of NK/lymphokine-activated killer cells, and stimulate the production of IFN-gamma by resting PBMC. Its function is as follows. Associates with IL23A to form the IL-23 interleukin, a heterodimeric cytokine which functions in innate and adaptive immunity. IL-23 may constitute with IL-17 an acute response to infection in peripheral tissues. IL-23 binds to a heterodimeric receptor complex composed of IL12RB1 and IL23R, activates the Jak-Stat signaling cascade, stimulates memory rather than naive T-cells and promotes production of pro-inflammatory cytokines. IL-23 induces autoimmune inflammation and thus may be responsible for autoimmune inflammatory diseases and may be important for tumorigenesis. The protein is Interleukin-12 subunit beta (IL12B) of Marmota monax (Woodchuck).